Here is a 365-residue protein sequence, read N- to C-terminus: Sulfotransferase 2B1 (365 aa).

70-75 (KSGTTW) serves as a coordination point for 3'-phosphoadenylyl sulfate. Residues W98, W103, and H125 each coordinate substrate. H125 serves as the catalytic Proton acceptor. 3'-phosphoadenylyl sulfate-binding positions include R147, S155, Y210, 244 to 249 (STFSAM), and 274 to 276 (RKG). Residues 303–365 (GMPTFPWDED…ASETPHPRPS (63 aa)) are disordered. Over residues 309-325 (WDEDPEEDGSPDPEPSP) the composition is skewed to acidic residues. Phosphoserine is present on S348.

This sequence belongs to the sulfotransferase 1 family. In terms of processing, phosphorylated. In terms of tissue distribution, expressed in the stratum granulosum-stratum corneum junction in the skin (at protein level). Expressed highly in placenta, prostate and trachea and lower expression in the small intestine and lung.

Its subcellular location is the cytoplasm. It is found in the cytosol. It localises to the microsome. The protein resides in the nucleus. It carries out the reaction an alcohol + 3'-phosphoadenylyl sulfate = an alkyl sulfate + adenosine 3',5'-bisphosphate + H(+). It catalyses the reaction 3beta-hydroxyandrost-5-en-17-one + 3'-phosphoadenylyl sulfate = dehydroepiandrosterone 3-sulfate + adenosine 3',5'-bisphosphate + H(+). The enzyme catalyses (24S)-hydroxycholesterol + 3'-phosphoadenylyl sulfate = (24S)-hydroxycholesterol 3-sulfate + adenosine 3',5'-bisphosphate + H(+). The catalysed reaction is cholesterol + 3'-phosphoadenylyl sulfate = cholesterol sulfate + adenosine 3',5'-bisphosphate + H(+). It carries out the reaction pregnenolone + 3'-phosphoadenylyl sulfate = pregnenolone sulfate + adenosine 3',5'-bisphosphate + H(+). Functionally, sulfotransferase that utilizes 3'-phospho-5'-adenylyl sulfate (PAPS) as sulfonate donor to catalyze the sulfate conjugation. Responsible for the sulfation of cholesterol. Catalyzes sulfation of the 3beta-hydroxyl groups of steroids, such as, pregnenolone and dehydroepiandrosterone (DHEA). Preferentially sulfonates cholesterol, while it also has significant activity with pregnenolone and DHEA. Plays a role in epidermal cholesterol metabolism and in the regulation of epidermal proliferation and differentiation. Its function is as follows. Sulfonates pregnenolone but not cholesterol. This chain is Sulfotransferase 2B1 (SULT2B1), found in Homo sapiens (Human).